Consider the following 115-residue polypeptide: U3-lycotoxin-Ls1v (115 aa).

The N-terminal stretch at 1-20 (MKFVLLFGVLLVTLFSHSSA) is a signal peptide. The propeptide occupies 21 to 44 (EMLDDFDQADEDELLSLIEKEEAR). 4 cysteine pairs are disulfide-bonded: C48–C63, C55–C72, C62–C87, and C74–C85.

Belongs to the neurotoxin 19 (CSTX) family. 01 subfamily. In terms of tissue distribution, expressed by the venom gland.

It is found in the secreted. The sequence is that of U3-lycotoxin-Ls1v from Lycosa singoriensis (Wolf spider).